The following is a 325-amino-acid chain: MDVETVEKEAIEKLEKVSNAQELEQFRVEFLGKKGKITSLMKNLKNLPPEERPAYGKRVNELREKVERLFSEKKKQIEELLERERMEKMRVDVTLPGARRKVGHSHPVLKVMEEIERIFVSMGFDVVEGPEIETTWHNFDALNTPEWHPARDEHDSFYITDELLLRTHTSPVQIRTMLERKPPIAIISPGKVYRRDYDATHLPMFHQVEGLHVDRDLSVAHLKFTLEEFARRMFGKNARIRLRPSYFPFTEPSFEVDVYLSGYGWLEILGAGMVDPNVFLNVGYDPEEWTGYAFGMGVERISMLKYGITDIREFVRNDVRFLSSY.

Glutamate 251 is a Mg(2+) binding site.

The protein belongs to the class-II aminoacyl-tRNA synthetase family. Phe-tRNA synthetase alpha subunit type 1 subfamily. As to quaternary structure, tetramer of two alpha and two beta subunits. It depends on Mg(2+) as a cofactor.

Its subcellular location is the cytoplasm. It carries out the reaction tRNA(Phe) + L-phenylalanine + ATP = L-phenylalanyl-tRNA(Phe) + AMP + diphosphate + H(+). The polypeptide is Phenylalanine--tRNA ligase alpha subunit (Thermotoga neapolitana (strain ATCC 49049 / DSM 4359 / NBRC 107923 / NS-E)).